Reading from the N-terminus, the 201-residue chain is Small ribosomal subunit protein uS4c (201 aa).

The S4 RNA-binding domain maps to 89-150 (MRLDNIVFRL…RQKSQAIITK (62 aa)).

Belongs to the universal ribosomal protein uS4 family. Part of the 30S ribosomal subunit. Contacts protein S5. The interaction surface between S4 and S5 is involved in control of translational fidelity.

Its subcellular location is the plastid. The protein localises to the chloroplast. One of the primary rRNA binding proteins, it binds directly to 16S rRNA where it nucleates assembly of the body of the 30S subunit. Its function is as follows. With S5 and S12 plays an important role in translational accuracy. This is Small ribosomal subunit protein uS4c (rps4) from Funaria hygrometrica (Moss).